Reading from the N-terminus, the 91-residue chain is Acylphosphatase (91 aa).

Positions 3 to 90 (RVSMIVSGQV…CGYSIFTIRR (88 aa)) constitute an Acylphosphatase-like domain. Active-site residues include Arg18 and Asn36.

The protein belongs to the acylphosphatase family.

The catalysed reaction is an acyl phosphate + H2O = a carboxylate + phosphate + H(+). This Methanospirillum hungatei JF-1 (strain ATCC 27890 / DSM 864 / NBRC 100397 / JF-1) protein is Acylphosphatase (acyP).